A 136-amino-acid chain; its full sequence is Group 1 truncated hemoglobin GlbN (136 aa).

His-81 contributes to the heme binding site.

This sequence belongs to the truncated hemoglobin family. Group I subfamily. As to quaternary structure, homodimer. Requires heme as cofactor.

Functionally, binds oxygen cooperatively with very high affinity (P(50) = 0.013 mmHg at 20 degrees Celsius) because of a fast combination (25 microM(-1)sec(-1)) and a slow dissociation (0.2 sec(-1)) rate. This Mycobacterium bovis (strain ATCC BAA-935 / AF2122/97) protein is Group 1 truncated hemoglobin GlbN (glbN).